The primary structure comprises 63 residues: MKAQELRTKSVEELNAELVNLLGEQFKLRMQAATGQLQQTHQLKQVRRSIAQIKTVLTEKAGE.

Belongs to the universal ribosomal protein uL29 family.

This Aggregatibacter actinomycetemcomitans (Actinobacillus actinomycetemcomitans) protein is Large ribosomal subunit protein uL29 (rpmC).